Here is a 421-residue protein sequence, read N- to C-terminus: UDP-N-acetylglucosamine 1-carboxyvinyltransferase (421 aa).

22–23 (KN) contributes to the phosphoenolpyruvate binding site. Arginine 94 contributes to the UDP-N-acetyl-alpha-D-glucosamine binding site. Catalysis depends on cysteine 118, which acts as the Proton donor. 2-(S-cysteinyl)pyruvic acid O-phosphothioketal is present on cysteine 118. UDP-N-acetyl-alpha-D-glucosamine is bound by residues 123-127 (RPMDL), aspartate 308, and isoleucine 330.

The protein belongs to the EPSP synthase family. MurA subfamily.

It localises to the cytoplasm. The catalysed reaction is phosphoenolpyruvate + UDP-N-acetyl-alpha-D-glucosamine = UDP-N-acetyl-3-O-(1-carboxyvinyl)-alpha-D-glucosamine + phosphate. The protein operates within cell wall biogenesis; peptidoglycan biosynthesis. Functionally, cell wall formation. Adds enolpyruvyl to UDP-N-acetylglucosamine. The protein is UDP-N-acetylglucosamine 1-carboxyvinyltransferase of Ruegeria pomeroyi (strain ATCC 700808 / DSM 15171 / DSS-3) (Silicibacter pomeroyi).